The following is a 109-amino-acid chain: Ycf20-like protein (109 aa).

It belongs to the ycf20 family.

The polypeptide is Ycf20-like protein (Synechocystis sp. (strain ATCC 27184 / PCC 6803 / Kazusa)).